A 437-amino-acid polypeptide reads, in one-letter code: Probable E3 ubiquitin-protein ligase TRIML2 (437 aa).

The segment at 14–55 adopts a B box-type zinc-finger fold; sequence TEDAYCETHLEPTRLFCDVDQITLCSKCFQSQEHKHHMVCGI. Zn(2+) is bound by residues cysteine 19, histidine 22, cysteine 41, and histidine 47. Residues 55–200 adopt a coiled-coil conformation; it reads IQEAAENYRK…IVELEKKCGE (146 aa). The B30.2/SPRY domain maps to 231–429; sequence DLSLCHIRGL…DSLTILQHGP (199 aa).

It catalyses the reaction S-ubiquitinyl-[E2 ubiquitin-conjugating enzyme]-L-cysteine + [acceptor protein]-L-lysine = [E2 ubiquitin-conjugating enzyme]-L-cysteine + N(6)-ubiquitinyl-[acceptor protein]-L-lysine.. The protein operates within protein modification; protein ubiquitination. This is Probable E3 ubiquitin-protein ligase TRIML2 from Homo sapiens (Human).